The chain runs to 743 residues: NAD(P)H-quinone oxidoreductase subunit 5, chloroplastic (743 aa).

14 helical membrane-spanning segments follow: residues 9-29, 40-60, 89-109, 125-145, 147-167, 184-204, 219-239, 258-278, 280-300, 396-416, 425-445, 548-568, 607-627, and 723-743; these read WIIP…LLLF, WAFH…DLSI, IDPL…MVLI, FAYM…SNLI, IYIF…FWFT, IGDL…GSFE, NEVN…GAVA, TPIS…FLVA, LLPL…IGII, TAFF…CFWS, WLYS…TAFY, LLPL…GIPF, IFSV…YKPV, and YLFL…FLNL.

Belongs to the complex I subunit 5 family. NDH is composed of at least 16 different subunits, 5 of which are encoded in the nucleus.

It localises to the plastid. It is found in the chloroplast thylakoid membrane. The catalysed reaction is a plastoquinone + NADH + (n+1) H(+)(in) = a plastoquinol + NAD(+) + n H(+)(out). The enzyme catalyses a plastoquinone + NADPH + (n+1) H(+)(in) = a plastoquinol + NADP(+) + n H(+)(out). In terms of biological role, NDH shuttles electrons from NAD(P)H:plastoquinone, via FMN and iron-sulfur (Fe-S) centers, to quinones in the photosynthetic chain and possibly in a chloroplast respiratory chain. The immediate electron acceptor for the enzyme in this species is believed to be plastoquinone. Couples the redox reaction to proton translocation, and thus conserves the redox energy in a proton gradient. The polypeptide is NAD(P)H-quinone oxidoreductase subunit 5, chloroplastic (ndhF) (Carpenteria californica (Tree anemone)).